Reading from the N-terminus, the 287-residue chain is Phycobilisome 32.1 kDa linker polypeptide, phycocyanin-associated, rod (287 aa).

The PBS-linker domain maps to 2-180 (AITAAASRLG…LYRGYANSDR (179 aa)). One can recognise a CpcD-like domain in the interval 235 to 287 (GRVYRIEVAGIRQPGYPGVRRSSTAFLVPYEQLSAKMQQLQRTGARIISVNPA).

It belongs to the phycobilisome linker protein family.

The protein localises to the cellular thylakoid membrane. In terms of biological role, rod linker protein, associated with phycocyanin. Linker polypeptides determine the state of aggregation and the location of the disk-shaped phycobiliprotein units within the phycobilisome and modulate their spectroscopic properties in order to mediate a directed and optimal energy transfer. In Thermosynechococcus vestitus (strain NIES-2133 / IAM M-273 / BP-1), this protein is Phycobilisome 32.1 kDa linker polypeptide, phycocyanin-associated, rod (cpcC).